We begin with the raw amino-acid sequence, 453 residues long: Potassium/proton antiporter CemA (453 aa).

Transmembrane regions (helical) follow at residues 235-255 (YMAC…IIFL), 328-348 (ICTI…ACLL), 378-398 (ILLL…EIII), and 414-434 (VSCF…YWIF).

Belongs to the CemA family.

Its subcellular location is the plastid. The protein resides in the chloroplast inner membrane. It carries out the reaction K(+)(in) + H(+)(out) = K(+)(out) + H(+)(in). Its function is as follows. Contributes to K(+)/H(+) antiport activity by supporting proton efflux to control proton extrusion and homeostasis in chloroplasts in a light-dependent manner to modulate photosynthesis. Prevents excessive induction of non-photochemical quenching (NPQ) under continuous-light conditions. Indirectly promotes efficient inorganic carbon uptake into chloroplasts. This Zygnema circumcarinatum (Green alga) protein is Potassium/proton antiporter CemA.